A 160-amino-acid polypeptide reads, in one-letter code: S-ribosylhomocysteine lyase (160 aa).

Positions 57, 61, and 127 each coordinate Fe cation.

This sequence belongs to the LuxS family. Homodimer. Fe cation serves as cofactor.

The catalysed reaction is S-(5-deoxy-D-ribos-5-yl)-L-homocysteine = (S)-4,5-dihydroxypentane-2,3-dione + L-homocysteine. Its function is as follows. Involved in the synthesis of autoinducer 2 (AI-2) which is secreted by bacteria and is used to communicate both the cell density and the metabolic potential of the environment. The regulation of gene expression in response to changes in cell density is called quorum sensing. Catalyzes the transformation of S-ribosylhomocysteine (RHC) to homocysteine (HC) and 4,5-dihydroxy-2,3-pentadione (DPD). The sequence is that of S-ribosylhomocysteine lyase from Streptococcus pyogenes serotype M2 (strain MGAS10270).